A 297-amino-acid chain; its full sequence is DNA processing protein DprA (297 aa).

Belongs to the DprA/Smf family. Interacts with RecA. Interacts with ComFA and ComFC.

The protein resides in the cytoplasm. Its function is as follows. Protein that helps load RecA onto ssDNA during transformation. Binds cooperatively to circular ssDNA, is able to bridge different segments of DNA. Favors the loading of RecA onto SsbA- or SsbB-coated ssDNA and formation of RecA-DNA filaments. RecA-ATP cannot catalyze homologous DNA strand exchange; SsbA and DprA activate strand exchange by RecA-ATP. This Bacillus subtilis (strain 168) protein is DNA processing protein DprA.